A 276-amino-acid polypeptide reads, in one-letter code: Digeranylgeranylglyceryl phosphate synthase (276 aa).

The next 8 helical transmembrane spans lie at Pro12–Pro34, Ile38–Phe60, Ala84–Leu104, Phe107–Leu127, Gly146–Val166, Val202–Val222, Val224–Leu244, and Gln256–Met276.

This sequence belongs to the UbiA prenyltransferase family. DGGGP synthase subfamily. It depends on Mg(2+) as a cofactor.

Its subcellular location is the cell membrane. It catalyses the reaction sn-3-O-(geranylgeranyl)glycerol 1-phosphate + (2E,6E,10E)-geranylgeranyl diphosphate = 2,3-bis-O-(geranylgeranyl)-sn-glycerol 1-phosphate + diphosphate. It participates in membrane lipid metabolism; glycerophospholipid metabolism. Prenyltransferase that catalyzes the transfer of the geranylgeranyl moiety of geranylgeranyl diphosphate (GGPP) to the C2 hydroxyl of (S)-3-O-geranylgeranylglyceryl phosphate (GGGP). This reaction is the second ether-bond-formation step in the biosynthesis of archaeal membrane lipids. This is Digeranylgeranylglyceryl phosphate synthase from Thermococcus gammatolerans (strain DSM 15229 / JCM 11827 / EJ3).